Here is a 559-residue protein sequence, read N- to C-terminus: U-box domain-containing protein 41 (559 aa).

Disordered regions lie at residues 1 to 30 (MGGNKQRWFSFHQRSSSATTTTLPQHKHDE) and 121 to 156 (RMDKDPNPSPGQSPGPGDKDPEPEILPPVEENSPSD). Over residues 12 to 24 (HQRSSSATTTTLP) the composition is skewed to polar residues. The 75-residue stretch at 30-104 (ETPPEFLCPI…FSWCDRQKVD (75 aa)) folds into the U-box domain. 5 ARM repeats span residues 266-305 (EDLRVSLCTDRILSFLRSLLVSRYNLVQTNAAASVVNLSL), 307-346 (KQNKVKIVRSGFVPLLIDVLKSGTTEAQEHVAGALFSLAL), 348-388 (DENK…HLSL), 390-427 (PSNRTRLVRAGAVPTLLSMVRSGDSTSRILLVLCNLAA), and 428-472 (CPDG…TLCQ).

The catalysed reaction is S-ubiquitinyl-[E2 ubiquitin-conjugating enzyme]-L-cysteine + [acceptor protein]-L-lysine = [E2 ubiquitin-conjugating enzyme]-L-cysteine + N(6)-ubiquitinyl-[acceptor protein]-L-lysine.. Its pathway is protein modification; protein ubiquitination. In terms of biological role, functions as an E3 ubiquitin ligase. In Arabidopsis thaliana (Mouse-ear cress), this protein is U-box domain-containing protein 41 (PUB41).